Here is a 90-residue protein sequence, read N- to C-terminus: Iron oxidase (90 aa).

The tat-type signal signal peptide spans Met1–Ala37. Residues Cys57, Cys60, Cys69, and Cys82 each coordinate [4Fe-4S] cluster.

This sequence belongs to the high-potential iron-sulfur protein (HiPIP) family. Homomultimer. Post-translationally, predicted to be exported by the Tat system. The position of the signal peptide cleavage has been experimentally proven.

Its subcellular location is the periplasm. Catalyzes the oxidation of Fe(2+) to Fe(3+) coupled to cytochrome c552 reduction. The polypeptide is Iron oxidase (iro) (Acidithiobacillus ferrooxidans (Thiobacillus ferrooxidans)).